Consider the following 376-residue polypeptide: N-acetyldiaminopimelate deacetylase (376 aa).

D69 is a catalytic residue. E128 functions as the Proton acceptor in the catalytic mechanism.

It belongs to the peptidase M20A family. N-acetyldiaminopimelate deacetylase subfamily.

It catalyses the reaction N-acetyl-(2S,6S)-2,6-diaminopimelate + H2O = (2S,6S)-2,6-diaminopimelate + acetate. It functions in the pathway amino-acid biosynthesis; L-lysine biosynthesis via DAP pathway; LL-2,6-diaminopimelate from (S)-tetrahydrodipicolinate (acetylase route): step 3/3. In terms of biological role, catalyzes the conversion of N-acetyl-diaminopimelate to diaminopimelate and acetate. The polypeptide is N-acetyldiaminopimelate deacetylase (Streptococcus pneumoniae (strain JJA)).